Consider the following 131-residue polypeptide: Protein GLUTAMINE DUMPER 5 (131 aa).

Over 1-34 (MRQFPSIRGNINEKMMTTMVESQTRSPWRTPVPY) the chain is Extracellular. The chain crosses the membrane as a helical span at residues 35-55 (LFGGLAAMLGLIAFALLLLAC). Residues 56–131 (SYWRLSRQTE…GESKVTEENH (76 aa)) are Cytoplasmic-facing. A VIMAG motif is present at residues 88 to 92 (VIMAG).

The protein belongs to the GLUTAMINE DUMPER 1 (TC 9.B.60) family. In terms of tissue distribution, expressed in the vascular tissues. Also detected in guard cells.

The protein localises to the membrane. Functionally, probable subunit of an amino acid transporter involved in the regulation of the amino acid metabolism. Stimulates amino acid export by activating nonselective amino acid facilitators. The protein is Protein GLUTAMINE DUMPER 5 (GDU5) of Arabidopsis thaliana (Mouse-ear cress).